The following is a 134-amino-acid chain: MSDFWENELVEIAAYYSVAVLCLVLFLTVFELVTAYKNWEEIQKGNLAVAMATGGKILGIANVFQHSISQHNSLLQMIGWGVYGFVMLLISYFIFEFLTPRFKIDQEIENDNRAVGFISFVISVGLSFVVAAGI.

Transmembrane regions (helical) follow at residues 10-30, 48-68, 78-98, and 114-134; these read VEIA…LTVF, AVAM…QHSI, IGWG…FEFL, and AVGF…AAGI.

This sequence belongs to the UPF0719 family.

The protein resides in the cell membrane. In Bacillus subtilis (strain 168), this protein is UPF0719 transmembrane protein YshE (yshE).